The sequence spans 1742 residues: MAVAELYTQYNRVWIPDPEEVWKSAEIAKDYRVGDKVLRLLLEDGTELDYSVNPESLPPLRNPDILVGENDLTALSYLHEPAVLHNLRIRFAESKLIYTYSGIILVAMNPYKQLPIYGDAIIHAYSGQNMGDMDPHIFAVAEEAYKQMARNNRNQSIIVSGESGAGKTVSARYAMRYFATVSKSGSNAHVEDKVLASNPITEAVGNAKTTRNDNSSRFGKYTEISFDEQNQIIGANMSTYLLEKSRVVFQSENERNYHIFYQLCASAQQSEFKHLKLGSAEEFNYTRMGGNTVIEGVNDRAEMVETQKTFTLLGFKEDFQMDVFKILAAILHLGNVQITAVGNERSSVSEDDSHLKVFCELLGLESGRVAQWLCNRKIVTSSETVVKPMTRPQAVNARDALAKKIYAHLFDFIVERINQALQFSGKQHTFIGVLDIYGFETFDVNSFEQFCINYANEKLQQQFNMHVFKLEQEEYMKEDIPWTLIDFYDNQPVIDLIEAKMGILELLDEECLLPHGTDENWLQKLYNNFVNRNPLFEKPRMSNTSFVIQHFADKVEYKCEGFLEKNRDTVYDMLVEILRASKFHLCANFFQENPTPPSPFGSMITVKSAKQVIKPNSKHFRTTVGSKFRSSLYLLMETLNATTPHYVRCIKPNDEKLPFEFDSKRIVQQLRACGVLETIRISAQSYPSRWTYIEFYSRYGILMTKQELSFSDKKEVCKVVLHRLIQDSNQYQFGKTKIFFRAGQVAYLEKLRLDKLRQSCVMVQKHMRGWLQRKKFLRERRAALIIQQYFRGQQTVRKAITAVALKEAWAAIIIQKHCRGYLVRSLYQLIRMATITMQAYSRGFLARRRYRKMLEEHKAVILQKYARAWLARRRFQSIRRFVLNIQLTYRVQRLQKKLEDQNKENHGLVEKLTSLAALRAGDVEKIQKLEAELEKAATHRRNYEEKGKRYRDAVEEKLAKLQKHNSELETQKEQIQLKLQEKTEELKEKMDNLTKQLFDDVQKEERQRMLLEKSFELKTQDYEKQIQSLKEEIKALKDEKMQLQHLVEGEHVTSDGLKAEVARLSKQVKTISEFEKEIELLQAQKIDVEKHVQSQKREMREKMSEITKQLLESYDIEDVRSRLSVEDLEHLNEDGELWFAYEGLKKATRVLESHFQSQKDCYEKEIEALNFKVVHLSQEINHLQKLFREENDINESIRHEVTRLTSENMMIPDFKQQISELEKQKQDLEIRLNEQAEKMKGKLEELSNQLHRSQEEEGTQRKALEAQNEIHTKEKEKLIDKIQEMQEASDHLKKQFETESEVKCNFRQEASRLTLENRDLEEELDMKDRVIKKLQDQVKTLSKTIGKANDVHSSSGPKEYLGMLQYKREDEAKLIQNLILDLKPRGVVVNMIPGLPAHILFMCVRYADSLNDANMLKSLMNSTINGIKQVVKEHLEDFEMLSFWLSNTCHFLNCLKQYSGEEEFMKHNSPQQNKNCLNNFDLSEYRQILSDVAIRIYHQFIIIMEKNIQPIIVPGMLEYESLQGISGLKPTGFRKRSSSIDDTDGYTMTSVLQQLSYFYTTMCQNGLDPELVRQAVKQLFFLIGAVTLNSLFLRKDMCSCRKGMQIRCNISYLEEWLKDKNLQNSLAKETLEPLSQAAWLLQVKKTTDSDAKEIYERCTSLSAVQIIKILNSYTPIDDFEKRVTPSFVRKVQALLNSREDSSQLMLDTKYLFQVTFPFTPSPHALEMIQIPSSFKLGFLNRL.

The residue at position 2 (Ala-2) is an N-acetylalanine. The Myosin N-terminal SH3-like domain maps to Thr-8–Asn-62. One can recognise a Myosin motor domain in the interval Val-67–Leu-753. Gly-161–Thr-168 provides a ligand contact to ATP. Positions Leu-632–Asp-654 are actin-binding. 5 IQ domains span residues Leu-756–Glu-779, Arg-780–Lys-806, Glu-807–Leu-829, Ile-830–Leu-854, and Glu-855–Asn-884. Residues Asn-884–Val-1351 adopt a coiled-coil conformation. The Dilute domain occupies Asn-1421 to Ser-1697.

It belongs to the TRAFAC class myosin-kinesin ATPase superfamily. Myosin family. As to expression, expressed chiefly in non-neuronal tissues. Particularly abundant in epithelial and glandular tissues including pancreas, prostate, mammary, stomach, colon and lung.

May be involved in transferrin trafficking. Likely to power actin-based membrane trafficking in many physiologically crucial tissues. This Homo sapiens (Human) protein is Unconventional myosin-Vc (MYO5C).